The sequence spans 289 residues: MAMGSGGGAGSEQEDTVLFRRGTGQSDDSDIWDDTALIKAYDKAVASFKHALKNGDMCETSDKPKGTARRKPAKKNKNQKKNATAPLKQWKAGDKCSAVWSEDGCVYPATITSVDLKRETCVVVYTGYGNKEEQNLSDLLSPTCEVANNTEQNTQENESQVSTDDSEHSSRSLRSKAHSKSKAAPWTSFLPPPPPVPGAGLGPGKPGLRFSGPPPPPPPPPPFLPCWMPPFPSGPPIIPPPPPISPDCLDDTDALGSMLISWYMSGYHTGYYMGFRQNKKEGKKCSHTN.

A compositionally biased stretch (gly residues) spans 1 to 10 (MAMGSGGGAG). A disordered region spans residues 1–27 (MAMGSGGGAGSEQEDTVLFRRGTGQSD). Positions 11 to 42 (SEQEDTVLFRRGTGQSDDSDIWDDTALIKAYD) are P1 (binding site for GEMIN2). At T23 the chain carries Phosphothreonine. S26 and S29 each carry phosphoserine. Residue K49 forms a Glycyl lysine isopeptide (Lys-Gly) (interchain with G-Cter in SUMO2) linkage. Residues 55 to 88 (GDMCETSDKPKGTARRKPAKKNKNQKKNATAPLK) form a disordered region. Residues 66–80 (GTARRKPAKKNKNQK) show a composition bias toward basic residues. T67 is modified (phosphothreonine). The Tudor domain maps to 89-149 (QWKAGDKCSA…LSPTCEVANN (61 aa)). A required for interaction with RPP20/POP7 region spans residues 95 to 205 (KCSAVWSEDG…VPGAGLGPGK (111 aa)). Residues 150–226 (TEQNTQENES…PPPPPPFLPC (77 aa)) are disordered. Over residues 171–181 (RSLRSKAHSKS) the composition is skewed to basic residues. K205 participates in a covalent cross-link: Glycyl lysine isopeptide (Lys-Gly) (interchain with G-Cter in SUMO2). Residues 212–226 (GPPPPPPPPPPFLPC) are compositionally biased toward pro residues. A P2 (binding site for SM B) region spans residues 235–262 (PPIIPPPPPISPDCLDDTDALGSMLISW). The segment at 274-289 (GFRQNKKEGKKCSHTN) is required for interaction with SYNCRIP.

It belongs to the SMN family. Homooligomer; may form higher order homooligomers in the dimer to octamer range. Part of the core SMN complex that contains SMN1, GEMIN2/SIP1, DDX20/GEMIN3, GEMIN4, GEMIN5, GEMIN6, GEMIN7, GEMIN8 and STRAP/UNRIP. Part of the SMN-Sm complex that contains SMN1, GEMIN2/SIP1, DDX20/GEMIN3, GEMIN4, GEMIN5, GEMIN6, GEMIN7, GEMIN8, STRAP/UNRIP and the Sm proteins SNRPB, SNRPD1, SNRPD2, SNRPD3, SNRPE, SNRPF and SNRPG. Component of an import snRNP complex composed of KPNB1, RNUT1, SMN1 and ZNF259. Interacts with DDX20, FBL, NOLA1, RNUT1 and with several spliceosomal snRNP core Sm proteins, including SNRPB, SNRPD1, SNRPD2, SNRPD3, SNRPE and ILF3. Interacts with GEMIN2; the interaction is direct. Interacts with GEMIN3; the interaction is direct. Interacts with GEMIN8; the interaction is direct. Interacts with SNRPB; the interaction is direct. Interacts (via Tudor domain) with SNRPD1 (via C-terminus); the interaction is direct. Interacts with SNRPD2; the interaction is direct. Interacts (via Tudor domain) with SNRPD3 (via C-terminus); the interaction is direct. Interacts with SNRPE; the interaction is direct. Interacts with OSTF1, LSM10, LSM11 and RPP20/POP7. Interacts (via C-terminal region) with ZPR1 (via C-terminal region). Interacts (via Tudor domain) with COIL. Interacts with SETX; recruits SETX to POLR2A. Interacts with POLR2A (via the C-terminal domain (CTD)). Interacts with PRMT5. Interacts with XRN2. Interacts (via C-terminus) with FMR1 (via C-terminus); the interaction is direct and occurs in a RNA-independent manner. Interacts with SYNCRIP. Interacts (via Tudor domain) with SF3B2 (methylated form). Interacts with WRAP53/TCAB1. Interacts (via Tudor domain) with ELAVL4 in an RNA-independent manner; the interaction is required for localization of ELAVL4 to RNA granules. Interacts with FRG1.

Its subcellular location is the nucleus. It localises to the gem. It is found in the cajal body. The protein localises to the cytoplasm. The protein resides in the cytoplasmic granule. Its subcellular location is the perikaryon. It localises to the cell projection. It is found in the neuron projection. The protein localises to the axon. The protein resides in the myofibril. Its subcellular location is the sarcomere. It localises to the z line. Its function is as follows. The SMN complex catalyzes the assembly of small nuclear ribonucleoproteins (snRNPs), the building blocks of the spliceosome, and thereby plays an important role in the splicing of cellular pre-mRNAs. Most spliceosomal snRNPs contain a common set of Sm proteins SNRPB, SNRPD1, SNRPD2, SNRPD3, SNRPE, SNRPF and SNRPG that assemble in a heptameric protein ring on the Sm site of the small nuclear RNA to form the core snRNP (Sm core). In the cytosol, the Sm proteins SNRPD1, SNRPD2, SNRPE, SNRPF and SNRPG are trapped in an inactive 6S pICln-Sm complex by the chaperone CLNS1A that controls the assembly of the core snRNP. To assemble core snRNPs, the SMN complex accepts the trapped 5Sm proteins from CLNS1A forming an intermediate. Binding of snRNA inside 5Sm ultimately triggers eviction of the SMN complex, thereby allowing binding of SNRPD3 and SNRPB to complete assembly of the core snRNP. Within the SMN complex, SMN1 acts as a structural backbone and together with GEMIN2 it gathers the Sm complex subunits. Ensures the correct splicing of U12 intron-containing genes that may be important for normal motor and proprioceptive neurons development. Also required for resolving RNA-DNA hybrids created by RNA polymerase II, that form R-loop in transcription terminal regions, an important step in proper transcription termination. May also play a role in the metabolism of small nucleolar ribonucleoprotein (snoRNPs). In Rattus norvegicus (Rat), this protein is Survival motor neuron protein (Smn1).